The following is a 968-amino-acid chain: Catenin delta-1 (968 aa).

Residue Met1 is modified to N-acetylmethionine. The segment at 1 to 357 (MDDSEVESTA…ASLDSLRKGG (357 aa)) is necessary and sufficient for interaction with CCDC85B. At Ser4 the chain carries Phosphoserine. Residues 10-46 (ASILASVKEQEAQFEKLTRALEEERRHVSAQLERVRV) are a coiled coil. Ser47 is modified (phosphoserine). Phosphothreonine is present on Thr59. Tyr112 is subject to Phosphotyrosine; by FYN. Ser125 is modified (phosphoserine). Residues Tyr217 and Tyr221 each carry the phosphotyrosine modification. Ser225 is modified (phosphoserine). Residue Tyr228 is modified to Phosphotyrosine. 2 positions are modified to phosphoserine: Ser230 and Ser252. Phosphotyrosine is present on Tyr257. Phosphoserine occurs at positions 268 and 269. Tyr280 is modified (phosphotyrosine). Ser288 carries the phosphoserine; by PAK5 modification. At Tyr291 the chain carries Phosphotyrosine. Residues 299-306 (MSDYGTAR) carry the Nuclear localization signal (NLS) motif. Residue Ser300 is modified to Phosphoserine. Residue Thr304 is modified to Phosphothreonine. Phosphoserine occurs at positions 320, 346, 349, and 352. 4 ARM repeats span residues 358–395 (PPPP…HLCY), 398–437 (DKVK…NISF), 441–475 (QDNK…ITGT), and 476–516 (LWNL…NEDC). Lys421 is covalently cross-linked (Glycyl lysine isopeptide (Lys-Gly) (interchain with G-Cter in SUMO2)). Lys517 participates in a covalent cross-link: Glycyl lysine isopeptide (Lys-Gly) (interchain with G-Cter in SUMO2). The Nuclear localization signal (NLS) motif lies at 521 to 528 (IEWESVLT). ARM repeat units lie at residues 534–573 (LRNV…DSDS), 583–624 (LRNL…AKKG), 653–693 (ARGY…NLCA), 700–739 (RYIR…NLAV), 740–780 (DARN…SILN), and 781–826 (TINE…ALVL). A phosphothreonine mark is found at Ile566, Asp572, Ser587, and Glu593. The Nuclear localization signal (NLS) motif lies at 568-575 (QKDSDSKL). A Phosphoserine modification is found at Ser617. The Nuclear localization signal (NLS) signature appears at 622–629 (KKGKDEWF). Ser713 is subject to Phosphoserine. Residues Glu788, Lys794, and Asn809 each carry the phosphothreonine modification. The residue at position 811 (Ser811) is a Phosphoserine. A phosphothreonine mark is found at Ser815, Leu835, and Lys841. Phosphoserine is present on Ser847. Residues 855–944 (NASRSQSSHS…LMQDEGQESL (90 aa)) form a disordered region. Position 856 is a phosphothreonine (Ala856). Ser857, Ser859, and Ser861 each carry phosphoserine. Phosphothreonine is present on Ser862. Phosphoserine is present on Ser864. The residue at position 865 (Tyr865) is a Phosphotyrosine. Ser868 is subject to Phosphoserine. Thr869 is modified (phosphothreonine). The span at 875 to 888 (RNQKSDKKPDREEI) shows a compositional bias: basic and acidic residues. Residue Ser879 is modified to Phosphoserine. Residue Lys882 forms a Glycyl lysine isopeptide (Lys-Gly) (interchain with G-Cter in SUMO2) linkage. Phosphothreonine occurs at positions 889 and 895. Positions 889-908 (QMSNMGSNTKSLDNNYSTPN) are enriched in polar residues. Ser899 is subject to Phosphoserine. At Tyr904 the chain carries Phosphotyrosine. Phosphothreonine occurs at positions 906, 910, and 916. Residues 909-922 (ERGDHNRTLDRSGD) show a composition bias toward basic and acidic residues. Phosphoserine is present on residues Ser920 and Ser943.

This sequence belongs to the beta-catenin family. As to quaternary structure, belongs to a multiprotein cell-cell adhesion complex that also contains E-cadherin/CDH1, alpha-catenin/CTNNA1, beta-catenin/CTNNB1, and gamma-catenin/JUP. Component of a cadherin:catenin adhesion complex composed of at least of CDH26, beta-catenin/CTNNB1, alpha-catenin/CTNNA1 and p120 catenin/CTNND1. Binds to the C-terminal fragment of PSEN1 and mutually competes for CDH1. Interacts with ZBTB33. Interacts with GLIS2. Interacts with FER. Interacts with NANOS1 (via N-terminal region). Interacts (via N-terminus) with GNA12; the interaction regulates CDH1-mediated cell-cell adhesion. Interacts with GNA13. Interacts with CCDC85B. Interacts with PLPP3; negatively regulates the PLPP3-mediated stabilization of CTNNB1. Interacts with DSG3; the interaction facilitates DSG3 localization and retention at cell-cell junctions. Interacts with CTNND1/p120-catenin; the interaction controls CADH5 endocytosis. Post-translationally, phosphorylated by FER and other protein-tyrosine kinases. Phosphorylated at Ser-288 by PAK5. Dephosphorylated by PTPRJ. In terms of tissue distribution, expressed in vascular endothelium. Melanocytes and melanoma cells primarily express the long isoform 1A, whereas keratinocytes express shorter isoforms, especially 3A. The shortest isoform 4A, is detected in normal keratinocytes and melanocytes, and generally lost from cells derived from squamous cell carcinomas or melanomas. The C-terminal alternatively spliced exon B is present in the p120ctn transcripts in the colon, intestine and prostate, but lost in several tumor tissues derived from these organs.

The protein resides in the cell junction. Its subcellular location is the adherens junction. It localises to the cytoplasm. It is found in the nucleus. The protein localises to the cell membrane. In terms of biological role, key regulator of cell-cell adhesion that associates with and regulates the cell adhesion properties of both C-, E- and N-cadherins, being critical for their surface stability. Promotes localization and retention of DSG3 at cell-cell junctions, via its interaction with DSG3. Beside cell-cell adhesion, regulates gene transcription through several transcription factors including ZBTB33/Kaiso2 and GLIS2, and the activity of Rho family GTPases and downstream cytoskeletal dynamics. Implicated both in cell transformation by SRC and in ligand-induced receptor signaling through the EGF, PDGF, CSF-1 and ERBB2 receptors. This is Catenin delta-1 from Homo sapiens (Human).